Consider the following 791-residue polypeptide: von Willebrand factor A domain-containing protein 2 (791 aa).

Residues 1–23 form the signal peptide; sequence MPPLLLLPAIYMLLFFRVSPTIS. Residues 51 to 221 form the VWFA 1 domain; sequence DILFLLDGSH…DATNGLLSTL (171 aa). N-linked (GlcNAc...) asparagine glycosylation occurs at N146. In terms of domain architecture, EGF-like 1 spans 295–332; that stretch reads PGPCDSQPCQNGGTCIPEGVDRYHCLCPLAFGGEVNCA. Intrachain disulfides connect C298–C309, C303–C319, and C321–C331. VWFA domains are found at residues 342 to 516 and 530 to 704; these read DVLF…QRRL and DLVF…IEWL. Residues 711 to 747 enclose the EGF-like 2 domain; sequence PVNLCKPSPCMNEGTCVLKNGSYRCECRGGWEGPHCE. 3 cysteine pairs are disulfide-bonded: C715–C726, C720–C735, and C737–C746. The tract at residues 762–791 is disordered; sequence HQEPAGLQGPTPSQQAPKHLRIGKALSSAK.

As to quaternary structure, forms monomers and multimers. In terms of tissue distribution, detected in uterus, kidney, and skin. Also detected in intestine and lung of adult mice, and in calvaria, femur, brain, heart, intestine, skeletal muscle, and lung of newborn mice.

The protein resides in the secreted. The polypeptide is von Willebrand factor A domain-containing protein 2 (Vwa2) (Mus musculus (Mouse)).